Consider the following 370-residue polypeptide: Cytochrome b (370 aa).

4 helical membrane passes run 25–45, 69–90, 105–125, and 170–190; these read FGSM…FLAV, WLMQ…YIHI, WLSG…GYVL, and FFAL…LHIM. 2 residues coordinate heme b: histidine 75 and histidine 89. Heme b is bound by residues histidine 174 and histidine 188. Histidine 193 contributes to the a ubiquinone binding site. 4 helical membrane-spanning segments follow: residues 218–238, 280–300, 312–332, and 339–358; these read YKDL…VSFF, LGGA…PFTH, FMQL…WTAT, and FTTI…ISNP.

The protein belongs to the cytochrome b family. In terms of assembly, the cytochrome bc1 complex contains 3 respiratory subunits (MT-CYB, CYC1 and UQCRFS1), 2 core proteins (UQCRC1 and UQCRC2) and probably 6 low-molecular weight proteins. Heme b is required as a cofactor.

Its subcellular location is the mitochondrion inner membrane. Its function is as follows. Component of the ubiquinol-cytochrome c reductase complex (complex III or cytochrome b-c1 complex) that is part of the mitochondrial respiratory chain. The b-c1 complex mediates electron transfer from ubiquinol to cytochrome c. Contributes to the generation of a proton gradient across the mitochondrial membrane that is then used for ATP synthesis. This chain is Cytochrome b (MT-CYB), found in Chilabothrus fordii (Ford's boa).